A 106-amino-acid polypeptide reads, in one-letter code: UPF0145 protein VV2_1464 (106 aa).

The protein belongs to the UPF0145 family.

This is UPF0145 protein VV2_1464 from Vibrio vulnificus (strain CMCP6).